A 152-amino-acid polypeptide reads, in one-letter code: Ribosomal RNA large subunit methyltransferase H (152 aa).

S-adenosyl-L-methionine contacts are provided by residues L69, G96, and 118 to 123 (FGKLTF).

This sequence belongs to the RNA methyltransferase RlmH family. In terms of assembly, homodimer.

The protein localises to the cytoplasm. The enzyme catalyses pseudouridine(1915) in 23S rRNA + S-adenosyl-L-methionine = N(3)-methylpseudouridine(1915) in 23S rRNA + S-adenosyl-L-homocysteine + H(+). Specifically methylates the pseudouridine at position 1915 (m3Psi1915) in 23S rRNA. This Mesomycoplasma hyopneumoniae (strain 232) (Mycoplasma hyopneumoniae) protein is Ribosomal RNA large subunit methyltransferase H.